The sequence spans 193 residues: Acyl carrier protein phosphodiesterase (193 aa).

The protein belongs to the AcpH family.

It catalyses the reaction holo-[ACP] + H2O = apo-[ACP] + (R)-4'-phosphopantetheine + H(+). In terms of biological role, converts holo-ACP to apo-ACP by hydrolytic cleavage of the phosphopantetheine prosthetic group from ACP. This Salmonella paratyphi A (strain ATCC 9150 / SARB42) protein is Acyl carrier protein phosphodiesterase.